A 250-amino-acid chain; its full sequence is Formylaminopyrimidine transport permease protein ThiX (250 aa).

Transmembrane regions (helical) follow at residues 5-25 (YQALEPTLFFLMLMVIWEISA), 62-82 (IISIGLALSIVLGILLSLLMF), 94-114 (LLVASQTIPVIALAPIFVLWF), 115-135 (GYSIWSKVAVTVLLTFFPITV), 172-192 (LPSFLTGLRIAVPLAVIGAAV), and 216-236 (PGVFAPIFILSLLGILGFAAI). An ABC transmembrane type-1 domain is found at 56–237 (LPATLAIISI…LGILGFAAIK (182 aa)).

This sequence belongs to the binding-protein-dependent transport system permease family. The complex is likely composed of an ATP-binding protein (ThiZ), a transmembrane protein (ThiX) and a solute-binding protein (ThiY).

The protein localises to the cell membrane. It functions in the pathway cofactor biosynthesis; thiamine diphosphate biosynthesis. In terms of biological role, participates in a thiamine pyrimidine salvage pathway as part of the ABC transporter complex ThiXYZ involved in the import of thiamine degradation products such as the formylaminopyrimidine N-formyl-4-amino-5-aminomethyl-2-methylpyrimidine (FAMP). Is probably responsible for the translocation of the substrate across the membrane. The polypeptide is Formylaminopyrimidine transport permease protein ThiX (Halalkalibacterium halodurans (strain ATCC BAA-125 / DSM 18197 / FERM 7344 / JCM 9153 / C-125) (Bacillus halodurans)).